The sequence spans 396 residues: MAKLDAYFGEYGGQYVPQILVPALDQLEQAFIDAQADEDFRAEFMTLLQEYAGRPTALTLCRNLTKGTKTKLYLKREDLLHGGAHKTNQVLGQALLALRMGKKEIIAETGAGQHGVATALACALLGLKCRVYMGAKDIERQSPNVFRMELMGAEVIPVHSGSATLKDACNEALRDWSATYETAHYLLGTAAGPHPFPTIVREFQRMIGEETKMQILAREGRLPDAVIACVGGGSNAIGMFADFIKEENVRLIGVEPAGKGIDTDQHGAPLKHGKTGIFFGMKAPLMQDEHGQIEESYSVSAGLDFPSVGPQHAHLNSIGRAEYGSVTDDEALEAFQILAKGEGIIPALESSHALAYALQMAHSEPEKEQLLVVNLSGRGDKDIFTVHDILKEKGEI.

Lys-86 carries the post-translational modification N6-(pyridoxal phosphate)lysine.

Belongs to the TrpB family. Tetramer of two alpha and two beta chains. The cofactor is pyridoxal 5'-phosphate.

It catalyses the reaction (1S,2R)-1-C-(indol-3-yl)glycerol 3-phosphate + L-serine = D-glyceraldehyde 3-phosphate + L-tryptophan + H2O. It participates in amino-acid biosynthesis; L-tryptophan biosynthesis; L-tryptophan from chorismate: step 5/5. The beta subunit is responsible for the synthesis of L-tryptophan from indole and L-serine. The polypeptide is Tryptophan synthase beta chain (Aliivibrio salmonicida (strain LFI1238) (Vibrio salmonicida (strain LFI1238))).